Reading from the N-terminus, the 353-residue chain is Protein RecA (353 aa).

67-74 (GPESSGKT) contributes to the ATP binding site.

This sequence belongs to the RecA family.

The protein resides in the cytoplasm. Can catalyze the hydrolysis of ATP in the presence of single-stranded DNA, the ATP-dependent uptake of single-stranded DNA by duplex DNA, and the ATP-dependent hybridization of homologous single-stranded DNAs. It interacts with LexA causing its activation and leading to its autocatalytic cleavage. The polypeptide is Protein RecA (Shewanella woodyi (strain ATCC 51908 / MS32)).